A 175-amino-acid polypeptide reads, in one-letter code: Methylated-DNA--protein-cysteine methyltransferase (175 aa).

C142 functions as the Nucleophile; methyl group acceptor in the catalytic mechanism.

This sequence belongs to the MGMT family.

The protein localises to the cytoplasm. It carries out the reaction a 6-O-methyl-2'-deoxyguanosine in DNA + L-cysteinyl-[protein] = S-methyl-L-cysteinyl-[protein] + a 2'-deoxyguanosine in DNA. The catalysed reaction is a 4-O-methyl-thymidine in DNA + L-cysteinyl-[protein] = a thymidine in DNA + S-methyl-L-cysteinyl-[protein]. In terms of biological role, involved in the cellular defense against the biological effects of O6-methylguanine (O6-MeG) and O4-methylthymine (O4-MeT) in DNA. Repairs the methylated nucleobase in DNA by stoichiometrically transferring the methyl group to a cysteine residue in the enzyme. This is a suicide reaction: the enzyme is irreversibly inactivated. This chain is Methylated-DNA--protein-cysteine methyltransferase, found in Thermococcus barophilus (strain DSM 11836 / MP).